Here is a 384-residue protein sequence, read N- to C-terminus: Carbamoyl phosphate synthase small chain (384 aa).

The tract at residues Met-1–Glu-189 is CPSase. Residues Ser-47, Gly-241, and Gly-243 each contribute to the L-glutamine site. A Glutamine amidotransferase type-1 domain is found at His-193 to Glu-380. The active-site Nucleophile is the Cys-269. Residues Leu-270, Gln-273, Asn-311, Gly-313, and Phe-314 each coordinate L-glutamine. Catalysis depends on residues His-353 and Glu-355.

It belongs to the CarA family. As to quaternary structure, composed of two chains; the small (or glutamine) chain promotes the hydrolysis of glutamine to ammonia, which is used by the large (or ammonia) chain to synthesize carbamoyl phosphate. Tetramer of heterodimers (alpha,beta)4.

The catalysed reaction is hydrogencarbonate + L-glutamine + 2 ATP + H2O = carbamoyl phosphate + L-glutamate + 2 ADP + phosphate + 2 H(+). It carries out the reaction L-glutamine + H2O = L-glutamate + NH4(+). It participates in amino-acid biosynthesis; L-arginine biosynthesis; carbamoyl phosphate from bicarbonate: step 1/1. It functions in the pathway pyrimidine metabolism; UMP biosynthesis via de novo pathway; (S)-dihydroorotate from bicarbonate: step 1/3. Functionally, small subunit of the glutamine-dependent carbamoyl phosphate synthetase (CPSase). CPSase catalyzes the formation of carbamoyl phosphate from the ammonia moiety of glutamine, carbonate, and phosphate donated by ATP, constituting the first step of 2 biosynthetic pathways, one leading to arginine and/or urea and the other to pyrimidine nucleotides. The small subunit (glutamine amidotransferase) binds and cleaves glutamine to supply the large subunit with the substrate ammonia. The polypeptide is Carbamoyl phosphate synthase small chain (Photobacterium profundum (strain SS9)).